The chain runs to 355 residues: Phospho-N-acetylmuramoyl-pentapeptide-transferase (355 aa).

The next 10 membrane-spanning stretches (helical) occupy residues 3–23 (GVLI…PWVI), 56–76 (VIIV…GIGF), 80–100 (GLLV…DDYI), 120–140 (AAVA…AGLL), 156–176 (VGII…SNAV), 185–205 (LAAG…FWQF), 224–244 (PLDV…FLWW), 251–271 (IFMG…IAIV), 276–296 (LLLV…MIQV), and 330–350 (FWIV…AEFL).

Belongs to the glycosyltransferase 4 family. MraY subfamily. Requires Mg(2+) as cofactor.

It is found in the cell membrane. It carries out the reaction UDP-N-acetyl-alpha-D-muramoyl-L-alanyl-gamma-D-glutamyl-meso-2,6-diaminopimeloyl-D-alanyl-D-alanine + di-trans,octa-cis-undecaprenyl phosphate = di-trans,octa-cis-undecaprenyl diphospho-N-acetyl-alpha-D-muramoyl-L-alanyl-D-glutamyl-meso-2,6-diaminopimeloyl-D-alanyl-D-alanine + UMP. Its pathway is cell wall biogenesis; peptidoglycan biosynthesis. Catalyzes the initial step of the lipid cycle reactions in the biosynthesis of the cell wall peptidoglycan: transfers peptidoglycan precursor phospho-MurNAc-pentapeptide from UDP-MurNAc-pentapeptide onto the lipid carrier undecaprenyl phosphate, yielding undecaprenyl-pyrophosphoryl-MurNAc-pentapeptide, known as lipid I. This Frankia casuarinae (strain DSM 45818 / CECT 9043 / HFP020203 / CcI3) protein is Phospho-N-acetylmuramoyl-pentapeptide-transferase.